We begin with the raw amino-acid sequence, 268 residues long: UPF0328 protein ECU10_1850 (268 aa).

The protein belongs to the UPF0328 family.

This Encephalitozoon cuniculi (strain GB-M1) (Microsporidian parasite) protein is UPF0328 protein ECU10_1850.